A 97-amino-acid polypeptide reads, in one-letter code: Apolipoprotein C-II (97 aa).

The first 22 residues, 1–22 (MGSRFFLALFLVLLVLGNEVQG), serve as a signal peptide directing secretion. Residues 63 to 71 (SVDEKLRDM) are lipid binding. The tract at residues 75 to 97 (SSAAMSTYAGIFTDQLLTLLKGE) is lipoprotein lipase cofactor.

The protein belongs to the apolipoprotein C2 family. In terms of processing, proapolipoprotein C-II is synthesized as a sialic acid containing glycoprotein which is subsequently desialylated prior to its proteolytic processing. Proapolipoprotein C-II, the major form found in plasma undergoes proteolytic cleavage of its N-terminal hexapeptide to generate the mature form apolipoprotein C-II, which occurs as the minor form in plasma.

It is found in the secreted. Component of chylomicrons, very low-density lipoproteins (VLDL), low-density lipoproteins (LDL), and high-density lipoproteins (HDL) in plasma. Plays an important role in lipoprotein metabolism as an activator of lipoprotein lipase. This chain is Apolipoprotein C-II (Apoc2), found in Grammomys surdaster (African woodland thicket rat).